We begin with the raw amino-acid sequence, 66 residues long: Small ribosomal subunit protein eS30 (66 aa).

The tract at residues 1–35 (MGKVHGGLNRAGKVRNATPKKDKEEKRKPKVGRAK) is disordered.

Belongs to the eukaryotic ribosomal protein eS30 family.

In Dictyostelium discoideum (Social amoeba), this protein is Small ribosomal subunit protein eS30 (rps30-1).